Consider the following 549-residue polypeptide: Zinc finger protein 266 (549 aa).

Residues 1-42 enclose the KRAB domain; sequence MLENYKNLATVGYQLFKPSLISWLEQEESRTVQRGDFQASEW. The C2H2-type 1; degenerate zinc finger occupies 156–178; sequence FDCSDSGKSFINHSHLQGHLRTH. The C2H2-type 2; degenerate zinc finger occupies 184 to 206; that stretch reads HEWKECGRGFIHSTDLAVRIQTH. 12 consecutive C2H2-type zinc fingers follow at residues 212–234, 240–262, 268–290, 296–318, 324–346, 352–374, 380–402, 408–430, 436–458, 464–486, 492–514, and 520–542; these read YKCK…MGTH, YECK…RKTH, YKCK…MKIH, YECK…LKTH, FECK…FRIH, YKCK…ARTH, YECK…TRTH, FECV…LRIH, FECL…MRTH, FTCM…MRIH, YKCK…ERTH, and YECK…ERRH. The disordered stretch occupies residues 530 to 549; sequence SSSSSFRNHERRHADERLSA.

It belongs to the krueppel C2H2-type zinc-finger protein family.

Its subcellular location is the nucleus. Its function is as follows. May be involved in transcriptional regulation. This is Zinc finger protein 266 (ZNF266) from Homo sapiens (Human).